Consider the following 703-residue polypeptide: Putative glycosyl hydrolase ecdE (703 aa).

The first 21 residues, 1 to 21 (MKLNIFASAILLCTSAFPVAA), serve as a signal peptide directing secretion. Residue aspartate 47 is part of the active site. 6 N-linked (GlcNAc...) asparagine glycosylation sites follow: asparagine 104, asparagine 120, asparagine 293, asparagine 397, asparagine 443, and asparagine 641.

The protein belongs to the glycosyl hydrolase 32 family.

This Aspergillus rugulosus (Emericella rugulosa) protein is Putative glycosyl hydrolase ecdE.